The chain runs to 326 residues: Holliday junction branch migration complex subunit RuvB (326 aa).

The tract at residues 1-180 (MKSISCGKEY…FGIPLHLEFY (180 aa)) is large ATPase domain (RuvB-L). ATP is bound by residues isoleucine 19, arginine 20, glycine 61, lysine 64, threonine 65, threonine 66, 127–129 (EDF), arginine 170, tyrosine 180, and arginine 217. Threonine 65 is a Mg(2+) binding site. A small ATPAse domain (RuvB-S) region spans residues 181 to 251 (SFEELVNIIK…VADSVLLKLG (71 aa)). The interval 254–326 (KMGLNKLDMN…QAKEYLSFQH (73 aa)) is head domain (RuvB-H). Residues arginine 307 and arginine 312 each coordinate DNA.

This sequence belongs to the RuvB family. In terms of assembly, homohexamer. Forms an RuvA(8)-RuvB(12)-Holliday junction (HJ) complex. HJ DNA is sandwiched between 2 RuvA tetramers; dsDNA enters through RuvA and exits via RuvB. An RuvB hexamer assembles on each DNA strand where it exits the tetramer. Each RuvB hexamer is contacted by two RuvA subunits (via domain III) on 2 adjacent RuvB subunits; this complex drives branch migration. In the full resolvosome a probable DNA-RuvA(4)-RuvB(12)-RuvC(2) complex forms which resolves the HJ.

It is found in the cytoplasm. The enzyme catalyses ATP + H2O = ADP + phosphate + H(+). The RuvA-RuvB-RuvC complex processes Holliday junction (HJ) DNA during genetic recombination and DNA repair, while the RuvA-RuvB complex plays an important role in the rescue of blocked DNA replication forks via replication fork reversal (RFR). RuvA specifically binds to HJ cruciform DNA, conferring on it an open structure. The RuvB hexamer acts as an ATP-dependent pump, pulling dsDNA into and through the RuvAB complex. RuvB forms 2 homohexamers on either side of HJ DNA bound by 1 or 2 RuvA tetramers; 4 subunits per hexamer contact DNA at a time. Coordinated motions by a converter formed by DNA-disengaged RuvB subunits stimulates ATP hydrolysis and nucleotide exchange. Immobilization of the converter enables RuvB to convert the ATP-contained energy into a lever motion, pulling 2 nucleotides of DNA out of the RuvA tetramer per ATP hydrolyzed, thus driving DNA branch migration. The RuvB motors rotate together with the DNA substrate, which together with the progressing nucleotide cycle form the mechanistic basis for DNA recombination by continuous HJ branch migration. Branch migration allows RuvC to scan DNA until it finds its consensus sequence, where it cleaves and resolves cruciform DNA. The protein is Holliday junction branch migration complex subunit RuvB of Wolbachia pipientis wMel.